The primary structure comprises 234 residues: Ubiquinone biosynthesis O-methyltransferase (234 aa).

Positions 40, 59, 80, and 123 each coordinate S-adenosyl-L-methionine.

The protein belongs to the methyltransferase superfamily. UbiG/COQ3 family.

The catalysed reaction is a 3-demethylubiquinol + S-adenosyl-L-methionine = a ubiquinol + S-adenosyl-L-homocysteine + H(+). The enzyme catalyses a 3-(all-trans-polyprenyl)benzene-1,2-diol + S-adenosyl-L-methionine = a 2-methoxy-6-(all-trans-polyprenyl)phenol + S-adenosyl-L-homocysteine + H(+). It functions in the pathway cofactor biosynthesis; ubiquinone biosynthesis. In terms of biological role, O-methyltransferase that catalyzes the 2 O-methylation steps in the ubiquinone biosynthetic pathway. The sequence is that of Ubiquinone biosynthesis O-methyltransferase from Coxiella burnetii (strain Dugway 5J108-111).